We begin with the raw amino-acid sequence, 667 residues long: Fatty acyl-CoA synthetase A (667 aa).

The protein belongs to the ATP-dependent AMP-binding enzyme family.

It is found in the endosome membrane. The catalysed reaction is a long-chain fatty acid + ATP + CoA = a long-chain fatty acyl-CoA + AMP + diphosphate. Its function is as follows. Long chain fatty acid acyl-CoA synthetases catalyze the formation of a thiester bond between a free fatty acid and coenzyme A during fatty acid metabolic process. May mediate fatty acid retrieval from the lumen of endosomes into the cytoplasm. This Dictyostelium discoideum (Social amoeba) protein is Fatty acyl-CoA synthetase A (fcsA).